The sequence spans 377 residues: Alanine racemase, catabolic (377 aa).

The Proton acceptor; specific for D-alanine role is filled by lysine 51. An N6-(pyridoxal phosphate)lysine modification is found at lysine 51. Residue arginine 150 coordinates substrate. The active-site Proton acceptor; specific for L-alanine is the tyrosine 272. Methionine 320 serves as a coordination point for substrate.

This sequence belongs to the alanine racemase family. Pyridoxal 5'-phosphate is required as a cofactor.

The catalysed reaction is L-alanine = D-alanine. Its function is as follows. Isomerizes L-alanine to D-alanine which is then oxidized to pyruvate by DadA. The protein is Alanine racemase, catabolic (dadX) of Rhizobium johnstonii (strain DSM 114642 / LMG 32736 / 3841) (Rhizobium leguminosarum bv. viciae).